The following is a 135-amino-acid chain: Putative pre-16S rRNA nuclease (135 aa).

The protein belongs to the YqgF nuclease family.

Its subcellular location is the cytoplasm. Its function is as follows. Could be a nuclease involved in processing of the 5'-end of pre-16S rRNA. In Clostridium novyi (strain NT), this protein is Putative pre-16S rRNA nuclease.